A 271-amino-acid chain; its full sequence is Protein FAM110D (271 aa).

Disordered regions lie at residues 1-83, 116-145, and 186-245; these read MLLA…RPDS, PRDA…APEA, and PQSW…PVSV. Positions 68–78 are enriched in basic residues; sequence RPVRRGSGRRL. Positions 116-126 are enriched in low complexity; sequence PRDAAPSSPAS. Residues 220 to 231 show a composition bias toward gly residues; that stretch reads SPGGAGGGGGSE.

It belongs to the FAM110 family.

The protein is Protein FAM110D (FAM110D) of Homo sapiens (Human).